A 390-amino-acid polypeptide reads, in one-letter code: Telobox protein 1 (390 aa).

The tract at residues 30–57 is disordered; that stretch reads ENPSKREVAQDVPGFERKPTKVRKPRVK. Over residues 32-48 the composition is skewed to basic and acidic residues; sequence PSKREVAQDVPGFERKP. HTH myb-type domains lie at 50–109 and 135–193; these read KVRK…PEDY and STRK…PERY. Residues 78–105 constitute a DNA-binding region (H-T-H motif); it reads WKKILLDERFHFTNRSPNDLKDRFRTIL. Residues 115-143 are disordered; that stretch reads NAKTHMGRPQKIPHTVGLSKSTRKERKQF. The H-T-H motif DNA-binding region spans 162–189; sequence WTRISKDANLGLQNRRSTDLRDRFRNAF. 2 stretches are compositionally biased toward polar residues: residues 244 to 257 and 322 to 340; these read SNPN…TEQP and ISPS…SIQQ. 2 disordered regions span residues 244 to 278 and 316 to 390; these read SNPN…FTSQ and QPPS…DNRG. Positions 347-360 are enriched in low complexity; that stretch reads PPLSSNTLNSSTLP.

It localises to the nucleus. Its function is as follows. General transcription factor with prominent roles in controlling histone levels and stability. Binds and regulates the activities of many promoters, including those controlling the expression of all four types of canonical histones. Is also involved in the centromeric loading of cnp1 and maintenance of centromere identity. Moreover, regulates the expression of cdc2, a protease capable of histone clipping. The protein is Telobox protein 1 of Schizosaccharomyces pombe (strain 972 / ATCC 24843) (Fission yeast).